The chain runs to 289 residues: Oxaloacetate decarboxylase (289 aa).

Residue serine 50 participates in substrate binding. Aspartate 88 lines the Mg(2+) pocket. 2 residues coordinate substrate: arginine 159 and histidine 235.

This sequence belongs to the isocitrate lyase/PEP mutase superfamily. Oxaloacetate decarboxylase family. In terms of assembly, homotetramer; dimer of dimers. Requires Mg(2+) as cofactor.

It catalyses the reaction oxaloacetate + H(+) = pyruvate + CO2. Functionally, catalyzes the decarboxylation of oxaloacetate into pyruvate. Seems to play a role in maintaining cellular concentrations of bicarbonate and pyruvate. This Pseudomonas syringae pv. tomato (strain ATCC BAA-871 / DC3000) protein is Oxaloacetate decarboxylase.